Consider the following 502-residue polypeptide: Glutamate--tRNA ligase (502 aa).

Positions 9–19 (PSPTGDPHVGT) match the 'HIGH' region motif. 4 residues coordinate Zn(2+): Cys-106, Cys-108, Cys-133, and His-135. A 'KMSKS' region motif is present at residues 250–254 (KLSKR). Lys-253 provides a ligand contact to ATP.

It belongs to the class-I aminoacyl-tRNA synthetase family. Glutamate--tRNA ligase type 1 subfamily. As to quaternary structure, monomer. It depends on Zn(2+) as a cofactor.

The protein resides in the cytoplasm. The catalysed reaction is tRNA(Glu) + L-glutamate + ATP = L-glutamyl-tRNA(Glu) + AMP + diphosphate. Catalyzes the attachment of glutamate to tRNA(Glu) in a two-step reaction: glutamate is first activated by ATP to form Glu-AMP and then transferred to the acceptor end of tRNA(Glu). In Protochlamydia amoebophila (strain UWE25), this protein is Glutamate--tRNA ligase.